Here is a 382-residue protein sequence, read N- to C-terminus: Alanine racemase (382 aa).

Lys39 (proton acceptor; specific for D-alanine) is an active-site residue. An N6-(pyridoxal phosphate)lysine modification is found at Lys39. Arg138 lines the substrate pocket. The Proton acceptor; specific for L-alanine role is filled by Tyr265. Residue Met312 coordinates substrate.

Belongs to the alanine racemase family. The cofactor is pyridoxal 5'-phosphate.

It carries out the reaction L-alanine = D-alanine. The protein operates within amino-acid biosynthesis; D-alanine biosynthesis; D-alanine from L-alanine: step 1/1. Catalyzes the interconversion of L-alanine and D-alanine. May also act on other amino acids. This is Alanine racemase (alr) from Staphylococcus epidermidis (strain ATCC 35984 / DSM 28319 / BCRC 17069 / CCUG 31568 / BM 3577 / RP62A).